Consider the following 124-residue polypeptide: Urease subunit beta (124 aa).

This sequence belongs to the urease beta subunit family. Heterotrimer of UreA (gamma), UreB (beta) and UreC (alpha) subunits. Three heterotrimers associate to form the active enzyme.

The protein resides in the cytoplasm. It catalyses the reaction urea + 2 H2O + H(+) = hydrogencarbonate + 2 NH4(+). Its pathway is nitrogen metabolism; urea degradation; CO(2) and NH(3) from urea (urease route): step 1/1. This Ureaplasma urealyticum serovar 10 (strain ATCC 33699 / Western) protein is Urease subunit beta.